The chain runs to 545 residues: CTP synthase (545 aa).

The tract at residues threonine 2–leucine 266 is amidoligase domain. Serine 14 lines the CTP pocket. Serine 14 serves as a coordination point for UTP. ATP-binding positions include serine 15 to isoleucine 20 and aspartate 72. The Mg(2+) site is built by aspartate 72 and glutamate 140. CTP is bound by residues aspartate 147 to glutamate 149, lysine 187 to glutamine 192, and lysine 223. Residues lysine 187–glutamine 192 and lysine 223 contribute to the UTP site. Lysine 239–valine 241 lines the ATP pocket. Residues threonine 291–arginine 542 enclose the Glutamine amidotransferase type-1 domain. Glycine 352 contacts L-glutamine. Residue cysteine 379 is the Nucleophile; for glutamine hydrolysis of the active site. L-glutamine is bound by residues leucine 380 to glutamine 383, glutamate 403, and arginine 470. Residues histidine 515 and glutamate 517 contribute to the active site.

Belongs to the CTP synthase family. Homotetramer.

The catalysed reaction is UTP + L-glutamine + ATP + H2O = CTP + L-glutamate + ADP + phosphate + 2 H(+). It catalyses the reaction L-glutamine + H2O = L-glutamate + NH4(+). The enzyme catalyses UTP + NH4(+) + ATP = CTP + ADP + phosphate + 2 H(+). It functions in the pathway pyrimidine metabolism; CTP biosynthesis via de novo pathway; CTP from UDP: step 2/2. Its activity is regulated as follows. Allosterically activated by GTP, when glutamine is the substrate; GTP has no effect on the reaction when ammonia is the substrate. The allosteric effector GTP functions by stabilizing the protein conformation that binds the tetrahedral intermediate(s) formed during glutamine hydrolysis. Inhibited by the product CTP, via allosteric rather than competitive inhibition. In terms of biological role, catalyzes the ATP-dependent amination of UTP to CTP with either L-glutamine or ammonia as the source of nitrogen. Regulates intracellular CTP levels through interactions with the four ribonucleotide triphosphates. The protein is CTP synthase of Salmonella typhi.